The sequence spans 242 residues: Mannose-P-dolichol utilization defect 1 protein homolog (242 aa).

Positions 37-95 constitute a PQ-loop 1 domain; it reads LSRGLGFAITLGSILLFVPQILKIQAARSAQGISAASQLLALVGAIGTASYSYRSGFVF. The next 7 membrane-spanning stretches (helical) occupy residues 40–60, 68–88, 98–118, 120–140, 148–168, 180–200, and 207–227; these read GLGFAITLGSILLFVPQILKI, GISAASQLLALVGAIGTASYS, WGDSFFVAVQLVIIILQIFLF, GQTMLSVGFLGIVSAVAYGVV, TLTAVQTAGIPIVVVSKLLQI, LSLISVFLQFAGTLARVFTSV, and LLIVSYSTAAVLNGLIFAQFF. The region spanning 152–202 is the PQ-loop 2 domain; it reads VQTAGIPIVVVSKLLQISQNYRAQSTGQLSLISVFLQFAGTLARVFTSVQD.

This sequence belongs to the MPDU1 (TC 2.A.43.3) family.

It localises to the membrane. The sequence is that of Mannose-P-dolichol utilization defect 1 protein homolog from Caenorhabditis elegans.